A 347-amino-acid chain; its full sequence is MNPIIYTTLIMTVMSGTMLVMISSHWLLIWIGFEMNLLAMIPVLMKNFNPRATEAATKYFLTQATASMMLMMAIIINLLYSGQWTITKMFNPVAMTMMTMALAMKLGLSPFHFWVPEVTQGISLQAGLLLLTWQKLAPLSVLCQISQSINPNLMLTMAMLSILIGGWGGLNQTQLRKIMAYSSIAHMGWMTAVLPYNTTMTILNLLIYITMTLAMFMLLIHSSATTTLSLSHTWNKMPVITSLMMVTLLSMGGLPPLSGFMPKWMIIQEMTKNESIIMPTLMAMTALLNLYFYMRLAYSSSLTMFPSTNNMKMKWQFEHTKQMKLLPTMIVLSTLVLPMTPALSSLN.

10 consecutive transmembrane segments (helical) span residues 3–23 (PIIY…VMIS), 25–45 (HWLL…PVLM), 59–79 (YFLT…INLL), 89–109 (MFNP…LGLS), 149–169 (INPN…GWGG), 178–198 (IMAY…PYNT), 200–220 (MTIL…MLLI), 237–257 (MPVI…LPPL), 274–294 (ESII…YFYM), and 325–345 (LLPT…ALSS).

This sequence belongs to the complex I subunit 2 family. In terms of assembly, core subunit of respiratory chain NADH dehydrogenase (Complex I) which is composed of 45 different subunits. Interacts with TMEM242.

It is found in the mitochondrion inner membrane. It carries out the reaction a ubiquinone + NADH + 5 H(+)(in) = a ubiquinol + NAD(+) + 4 H(+)(out). In terms of biological role, core subunit of the mitochondrial membrane respiratory chain NADH dehydrogenase (Complex I) which catalyzes electron transfer from NADH through the respiratory chain, using ubiquinone as an electron acceptor. Essential for the catalytic activity and assembly of complex I. The chain is NADH-ubiquinone oxidoreductase chain 2 from Sus scrofa (Pig).